The chain runs to 683 residues: DNA ligase (683 aa).

NAD(+)-binding positions include 43-47 (DAEYD), 92-93 (SL), and Glu-125. The active-site N6-AMP-lysine intermediate is Lys-127. NAD(+) is bound by residues Arg-148, Glu-185, Lys-303, and Lys-327. Positions 421, 424, 439, and 445 each coordinate Zn(2+). Residues 604–683 (IADNPLKGKN…QEFIALTGEN (80 aa)) form the BRCT domain.

The protein belongs to the NAD-dependent DNA ligase family. LigA subfamily. It depends on Mg(2+) as a cofactor. Mn(2+) is required as a cofactor.

It catalyses the reaction NAD(+) + (deoxyribonucleotide)n-3'-hydroxyl + 5'-phospho-(deoxyribonucleotide)m = (deoxyribonucleotide)n+m + AMP + beta-nicotinamide D-nucleotide.. Functionally, DNA ligase that catalyzes the formation of phosphodiester linkages between 5'-phosphoryl and 3'-hydroxyl groups in double-stranded DNA using NAD as a coenzyme and as the energy source for the reaction. It is essential for DNA replication and repair of damaged DNA. In Actinobacillus pleuropneumoniae serotype 5b (strain L20), this protein is DNA ligase.